The primary structure comprises 294 residues: ATP synthase gamma chain (294 aa).

This sequence belongs to the ATPase gamma chain family. In terms of assembly, F-type ATPases have 2 components, CF(1) - the catalytic core - and CF(0) - the membrane proton channel. CF(1) has five subunits: alpha(3), beta(3), gamma(1), delta(1), epsilon(1). CF(0) has three main subunits: a, b and c.

The protein resides in the cell inner membrane. Produces ATP from ADP in the presence of a proton gradient across the membrane. The gamma chain is believed to be important in regulating ATPase activity and the flow of protons through the CF(0) complex. The polypeptide is ATP synthase gamma chain (Paraburkholderia phytofirmans (strain DSM 17436 / LMG 22146 / PsJN) (Burkholderia phytofirmans)).